We begin with the raw amino-acid sequence, 729 residues long: Fatty acid oxidation complex subunit alpha (729 aa).

The segment at 1 to 189 (MLYKGDTLYL…KIGLVDGVVK (189 aa)) is enoyl-CoA hydratase/isomerase. Asp-296 contributes to the substrate binding site. Residues 311-729 (ETPKQAAVLG…ARPVGDLKTA (419 aa)) are 3-hydroxyacyl-CoA dehydrogenase. Residues Met-324, Asp-343, 400 to 402 (IVE), Lys-407, and Ser-429 each bind NAD(+). His-450 acts as the For 3-hydroxyacyl-CoA dehydrogenase activity in catalysis. Asn-453 serves as a coordination point for NAD(+). Residues Asn-500 and Tyr-660 each coordinate substrate. A disordered region spans residues 708-729 (RHNEPYYPPVEPARPVGDLKTA).

It in the N-terminal section; belongs to the enoyl-CoA hydratase/isomerase family. This sequence in the C-terminal section; belongs to the 3-hydroxyacyl-CoA dehydrogenase family. Heterotetramer of two alpha chains (FadB) and two beta chains (FadA).

The enzyme catalyses a (3S)-3-hydroxyacyl-CoA + NAD(+) = a 3-oxoacyl-CoA + NADH + H(+). It carries out the reaction a (3S)-3-hydroxyacyl-CoA = a (2E)-enoyl-CoA + H2O. It catalyses the reaction a 4-saturated-(3S)-3-hydroxyacyl-CoA = a (3E)-enoyl-CoA + H2O. The catalysed reaction is (3S)-3-hydroxybutanoyl-CoA = (3R)-3-hydroxybutanoyl-CoA. The enzyme catalyses a (3Z)-enoyl-CoA = a 4-saturated (2E)-enoyl-CoA. It carries out the reaction a (3E)-enoyl-CoA = a 4-saturated (2E)-enoyl-CoA. The protein operates within lipid metabolism; fatty acid beta-oxidation. In terms of biological role, involved in the aerobic and anaerobic degradation of long-chain fatty acids via beta-oxidation cycle. Catalyzes the formation of 3-oxoacyl-CoA from enoyl-CoA via L-3-hydroxyacyl-CoA. It can also use D-3-hydroxyacyl-CoA and cis-3-enoyl-CoA as substrate. The sequence is that of Fatty acid oxidation complex subunit alpha from Escherichia coli O157:H7.